The primary structure comprises 93 residues: UPF0521 protein A (93 aa).

Positions 2-58 form a coiled coil; that stretch reads SLKEVITSLKNDFHSINKEIDSMKENNEKQEDKIFQEIKKLKLEMELLRKDNLSFKT.

This sequence belongs to the UPF0521 family.

The chain is UPF0521 protein A from Dictyostelium discoideum (Social amoeba).